The sequence spans 460 residues: Putative RNA-guided DNA endonuclease MT2953 (460 aa).

Catalysis depends on residues Asp224 and Glu313. Zn(2+) is bound by residues Cys372, Cys375, Cys389, and Cys392. Asp399 is an active-site residue. The disordered stretch occupies residues 415–460 (VVGPVGAAVKRGADRKTGPGPAGGREARKATGHPAGEQPRDGVQVK).

In the N-terminal section; belongs to the transposase 2 family. This sequence in the C-terminal section; belongs to the transposase 35 family.

An RNA-guided dsDNA endonuclease. When guided by an RNA derived from the right-end element of its insertion sequence element (IS), cleaves DNA downstream of the transposon-associated motif (TAM). Cleaves supercoiled and linear DNA in a staggered manner 15-21 bases from the TAM yielding 5'-overhangs. Binds reRNA, an approximately 150 nucleotide base sRNA derived from the 3' end of its own gene, the right end (RE) of the insertion sequence (IS) plus sequence downstream of the IS. This Mycobacterium tuberculosis (strain CDC 1551 / Oshkosh) protein is Putative RNA-guided DNA endonuclease MT2953.